Consider the following 328-residue polypeptide: MQGSVTEFLKPRLVDIDAINPTRSKIVLEPLERGFGHTLGNALRRILLSSMPGCAVTEVEIDGVLHEYSAKEGVQEDIIEILLNLKGLAVTLEGKDEVFLTLAKSGVGPVTASDIQHDGDVTIANPDHVICNLTTNNSEISMRIRVERGRGYVPASSRLSSDDDERPIGRLLLDASFSPVERIAYSVESARVEQRTDLDKLIIDMETNGTLDPEEAIRRASTILAEQLDAFVDLRDVTEPEEKEEKPEFDPILLRPVDDLELTVRSANCLKAEQIQYIGDLVQRTEVELLKTPNLGKKSLTEIKDVLASRGLSLGMRLENWPPASLAE.

The segment at Met-1–Arg-235 is alpha N-terminal domain (alpha-NTD). Residues Phe-249–Glu-328 form an alpha C-terminal domain (alpha-CTD) region.

The protein belongs to the RNA polymerase alpha chain family. As to quaternary structure, homodimer. The RNAP catalytic core consists of 2 alpha, 1 beta, 1 beta' and 1 omega subunit. When a sigma factor is associated with the core the holoenzyme is formed, which can initiate transcription.

It catalyses the reaction RNA(n) + a ribonucleoside 5'-triphosphate = RNA(n+1) + diphosphate. DNA-dependent RNA polymerase catalyzes the transcription of DNA into RNA using the four ribonucleoside triphosphates as substrates. This Pseudoalteromonas translucida (strain TAC 125) protein is DNA-directed RNA polymerase subunit alpha.